The sequence spans 815 residues: Heme-copper oxidase subunit I+III (815 aa).

The interval 1–467 (MVSRLRGFLA…QLSTLGAFIF (467 aa)) is COX1. A helical membrane pass occupies residues 26 to 46 (LLYLVTSIAFLLIAGSLALLF). Position 70 (His70) interacts with Fe(II)-heme a. 18 helical membrane passes run 71–91 (GLIM…NYIV), 105–125 (LNAL…ASFF), 157–177 (LAIF…LVTI), 197–217 (ILFT…GGAL), 242–262 (LFWF…LGAM), 281–301 (LTAF…HMFI), 314–334 (ITTI…IFTL), 339–359 (LVYT…IIGG), 380–400 (VVAH…IAGL), 419–439 (IHFA…FALM), 463–483 (GAFI…YSLV), 580–600 (ALFG…VFLL), 637–657 (WVFI…YFFI), 683–703 (LINT…YLGV), 708–728 (YLIT…FLTV), 736–756 (LLIA…YVTT), 758–778 (AHAL…VKLF), and 791–811 (VLAV…VFPL). Residues His248, Tyr252, His297, and His298 each contribute to the Cu cation site. A cross-link (1'-histidyl-3'-tyrosine (His-Tyr)) is located at residues 248 to 252 (HPEVY). His383 contacts heme a3. A Fe(II)-heme a-binding site is contributed by His385. The COX3 stretch occupies residues 545–815 (DVSNVPLSGG…TLVFPLYYLV (271 aa)).

It in the N-terminal section; belongs to the heme-copper respiratory oxidase family. The protein in the C-terminal section; belongs to the cytochrome c oxidase subunit 3 family. The cofactor is heme. Cu cation is required as a cofactor.

The protein resides in the cell membrane. The protein is Heme-copper oxidase subunit I+III (aoxB) of Aeropyrum pernix (strain ATCC 700893 / DSM 11879 / JCM 9820 / NBRC 100138 / K1).